We begin with the raw amino-acid sequence, 206 residues long: Small ribosomal subunit protein uS4 (206 aa).

An S4 RNA-binding domain is found at 96 to 158 (SRLDNVVYRM…AKKQLRIQNA (63 aa)).

Belongs to the universal ribosomal protein uS4 family. As to quaternary structure, part of the 30S ribosomal subunit. Contacts protein S5. The interaction surface between S4 and S5 is involved in control of translational fidelity.

In terms of biological role, one of the primary rRNA binding proteins, it binds directly to 16S rRNA where it nucleates assembly of the body of the 30S subunit. Its function is as follows. With S5 and S12 plays an important role in translational accuracy. This chain is Small ribosomal subunit protein uS4, found in Francisella tularensis subsp. tularensis (strain FSC 198).